A 1394-amino-acid polypeptide reads, in one-letter code: ATP-dependent permease AUS1 (1394 aa).

Residues 1 to 420 (MSISKYFTPV…PLTTIGSYSR (420 aa)) lie on the Cytoplasmic side of the membrane. Residues 33–273 (KKSYDAEDSM…FRDTLGIEKD (241 aa)) enclose the ABC transporter 1 domain. Helical transmembrane passes span 421–443 (GSLT…PIAF), 468–490 (TVFD…YFLA), 497–519 (ARFF…LFAL), 529–551 (VANL…VIYL), 558–575 (FVWI…EAIL), and 636–658 (VWRN…LFAS). The Cytoplasmic segment spans residues 659–1080 (QYIKPYFNKD…QYICTKRDMT (422 aa)). The ABC transporter 2 domain occupies 751 to 978 (ISWKNINYTV…YFMSHDNTLV (228 aa)). Residue 782 to 789 (GESGAGKT) participates in ATP binding. 6 consecutive transmembrane segments (helical) span residues 1081–1103 (YVMA…FWHI), 1107–1129 (IIGL…PLIN), 1156–1178 (VLLL…LFFV), 1193–1215 (AGVF…LWLI), 1224–1246 (AAVF…QPYS), and 1346–1368 (FGIE…YLTY). Topologically, residues 1369 to 1394 (VARIWPKVFKIITKVIPHRGKKPVQN) are cytoplasmic.

The protein belongs to the ABC transporter superfamily. ABCG family. PDR (TC 3.A.1.205) subfamily.

It localises to the membrane. Transporter involved in the uptake of sterol. This is ATP-dependent permease AUS1 (AUS1) from Saccharomyces cerevisiae (strain ATCC 204508 / S288c) (Baker's yeast).